Here is a 334-residue protein sequence, read N- to C-terminus: Spermidine synthase 1 (334 aa).

The interval 1-37 (MAAPENTLHSTDSPLKRQREDEVNGVSDTLSKEPQPN) is disordered. Residues 26–37 (VSDTLSKEPQPN) are compositionally biased toward polar residues. The PABS domain maps to 44-281 (PGWFSEISPM…GMIGFMLCST (238 aa)). Gln-75 is a binding site for S-adenosyl 3-(methylsulfanyl)propylamine. Residue Tyr-105 participates in putrescine binding. S-adenosyl 3-(methylsulfanyl)propylamine-binding positions include Gln-106, Asp-130, Glu-150, 181 to 182 (DG), and Asp-200. The active-site Proton acceptor is Asp-200. Putrescine contacts are provided by residues 200 to 203 (DSSD) and Tyr-269.

The protein belongs to the spermidine/spermine synthase family.

It carries out the reaction S-adenosyl 3-(methylsulfanyl)propylamine + putrescine = S-methyl-5'-thioadenosine + spermidine + H(+). It participates in amine and polyamine biosynthesis; spermidine biosynthesis; spermidine from putrescine: step 1/1. The protein is Spermidine synthase 1 (SPDSYN1) of Pisum sativum (Garden pea).